Reading from the N-terminus, the 832-residue chain is Protein monoglycylase TTLL8 (832 aa).

Over residues 1–13 (MSCPPTPNPPFRP) the composition is skewed to pro residues. Disordered regions lie at residues 1–84 (MSCP…QDLS) and 277–304 (GKSK…KLPS). 3 stretches are compositionally biased toward basic and acidic residues: residues 46–59 (QLRE…ERKK), 66–75 (DGDHKEENKL), and 280–299 (KKEE…ENPD). Positions 271–624 (YCSKVKGKSK…RKLDRNCDIG (354 aa)) constitute a TTL domain. ATP is bound by residues K397, 403–404 (RG), 435–438 (QKYI), 448–450 (KFD), and 492–493 (CN). A protein is bound at residue R403. Residue S495 coordinates L-glutamate. Mg(2+) contacts are provided by D570, E583, and N585. E583 provides a ligand contact to ATP.

Mg(2+) is required as a cofactor. As to expression, highly expressed in testis. Expressed in brain, heart, kidney, liver, lung, muscle, spleen and trachea. Expressed in sperm flagellum. In the brain, specifically expressed in ependymal cilia.

It localises to the cytoplasm. Its subcellular location is the cytoskeleton. It is found in the cell projection. The protein localises to the cilium. The protein resides in the cilium axoneme. It localises to the flagellum axoneme. It carries out the reaction L-glutamyl-[protein] + glycine + ATP = glycyl-L-glutamyl-[protein] + ADP + phosphate + H(+). Functionally, monoglycylase which modifies both tubulin and non-tubulin proteins, adding a single glycine on the gamma-carboxyl groups of specific glutamate residues to generate monoglycine side chains within the C-terminal tail of target proteins. Not involved in elongation step of the polyglycylation reaction. Preferentially monoglycylates alpha-tubulin over beta-tubulin. Together with TTLL3, mediates microtubule glycylation of primary and motile cilia, which is essential for their stability and maintenance. Together with TTLL3, glycylates sperm flagella which regulates axonemal dynein motor activity, thereby controlling flagellar beat, directional sperm swimming and male fertility. Monoglycylates non-tubulin proteins such as ANP32A, ANP32B, SET, NCL and NAP1. The polypeptide is Protein monoglycylase TTLL8 (Mus musculus (Mouse)).